Reading from the N-terminus, the 880-residue chain is Alanine--tRNA ligase (880 aa).

Zn(2+) is bound by residues histidine 566, histidine 570, cysteine 668, and histidine 672.

The protein belongs to the class-II aminoacyl-tRNA synthetase family. Zn(2+) serves as cofactor.

It localises to the cytoplasm. The catalysed reaction is tRNA(Ala) + L-alanine + ATP = L-alanyl-tRNA(Ala) + AMP + diphosphate. Catalyzes the attachment of alanine to tRNA(Ala) in a two-step reaction: alanine is first activated by ATP to form Ala-AMP and then transferred to the acceptor end of tRNA(Ala). Also edits incorrectly charged Ser-tRNA(Ala) and Gly-tRNA(Ala) via its editing domain. In Alkaliphilus oremlandii (strain OhILAs) (Clostridium oremlandii (strain OhILAs)), this protein is Alanine--tRNA ligase.